Consider the following 334-residue polypeptide: Adenosine deaminase (334 aa).

Zn(2+) is bound by residues H16 and H18. 3 residues coordinate substrate: H18, D20, and G173. H200 contacts Zn(2+). The Proton donor role is filled by E203. Residue D281 participates in Zn(2+) binding.

It belongs to the metallo-dependent hydrolases superfamily. Adenosine and AMP deaminases family. Adenosine deaminase subfamily. Requires Zn(2+) as cofactor.

The enzyme catalyses adenosine + H2O + H(+) = inosine + NH4(+). The catalysed reaction is 2'-deoxyadenosine + H2O + H(+) = 2'-deoxyinosine + NH4(+). Functionally, catalyzes the hydrolytic deamination of adenosine and 2-deoxyadenosine. This chain is Adenosine deaminase, found in Clostridium acetobutylicum (strain ATCC 824 / DSM 792 / JCM 1419 / IAM 19013 / LMG 5710 / NBRC 13948 / NRRL B-527 / VKM B-1787 / 2291 / W).